The primary structure comprises 61 residues: Small ribosomal subunit protein uS14 (61 aa).

The segment covering 1–12 (MSESETTDEPDS) has biased composition (acidic residues). The interval 1 to 25 (MSESETTDEPDSETASSERTGQLES) is disordered. Residues C26, C29, C44, and C47 each contribute to the Zn(2+) site.

Belongs to the universal ribosomal protein uS14 family. Zinc-binding uS14 subfamily. As to quaternary structure, part of the 30S ribosomal subunit. The cofactor is Zn(2+).

Its function is as follows. Binds 16S rRNA, required for the assembly of 30S particles. The sequence is that of Small ribosomal subunit protein uS14 from Haloarcula marismortui (strain ATCC 43049 / DSM 3752 / JCM 8966 / VKM B-1809) (Halobacterium marismortui).